The following is a 386-amino-acid chain: Copper-containing nitrite reductase (386 aa).

A signal peptide spans 1-18; sequence MKRQALAAIIASMFALAA. Cysteine 19 carries N-palmitoyl cysteine lipidation. Cysteine 19 carries S-diacylglycerol cysteine lipidation. Plastocyanin-like domains follow at residues 97–191 and 241–342; these read WTFD…ILVE and GHVG…LKVE. Histidine 130, histidine 135, histidine 170, cysteine 171, histidine 179, and methionine 184 together coordinate Cu cation. A substrate-binding site is contributed by histidine 135. Histidine 276 contacts substrate. Position 325 (histidine 325) interacts with Cu cation. Residues 363 to 386 form a disordered region; the sequence is GAAPAASAPAASAPAASAPAKSDY. The segment covering 364-386 has biased composition (low complexity); that stretch reads AAPAASAPAASAPAASAPAKSDY. 3 repeat units span residues 367–371, 372–376, and 377–381. The interval 367-381 is 3 X 5 AA tandem repeats of A-A-S-A-P; it reads AASAPAASAPAASAP.

The protein belongs to the multicopper oxidase family. In terms of assembly, homotrimer. Cu(+) serves as cofactor. Requires Cu(2+) as cofactor.

The protein localises to the cell outer membrane. It carries out the reaction nitric oxide + Fe(III)-[cytochrome c] + H2O = Fe(II)-[cytochrome c] + nitrite + 2 H(+). Catalyzes the reduction of nitrite to nitric oxide (NO). It could be essential for growth and survival in oxygen-depleted environments. The chain is Copper-containing nitrite reductase (aniA) from Neisseria meningitidis serogroup A / serotype 4A (strain DSM 15465 / Z2491).